A 95-amino-acid chain; its full sequence is SMAD5 antisense gene protein 1 (95 aa).

Disordered regions lie at residues 1-24 (MHKQPKLLPPPATPPPPPQSSSWS) and 43-70 (SSPTGLPKPHSPMPSPPEPEHSVGKPAN). Residues 7–19 (LLPPPATPPPPPQ) show a composition bias toward pro residues.

Expressed in fetal tissues.

The protein is SMAD5 antisense gene protein 1 (SMAD5-AS1) of Homo sapiens (Human).